Consider the following 417-residue polypeptide: UPF0597 protein FMG_0209 (417 aa).

Belongs to the UPF0597 family.

The polypeptide is UPF0597 protein FMG_0209 (Finegoldia magna (strain ATCC 29328 / DSM 20472 / WAL 2508) (Peptostreptococcus magnus)).